Consider the following 337-residue polypeptide: 4-hydroxythreonine-4-phosphate dehydrogenase (337 aa).

2 residues coordinate substrate: H139 and T140. The a divalent metal cation site is built by H173, H218, and H273. Residues K281, N290, and R299 each coordinate substrate.

This sequence belongs to the PdxA family. In terms of assembly, homodimer. Zn(2+) serves as cofactor. Requires Mg(2+) as cofactor. Co(2+) is required as a cofactor.

It localises to the cytoplasm. The enzyme catalyses 4-(phosphooxy)-L-threonine + NAD(+) = 3-amino-2-oxopropyl phosphate + CO2 + NADH. It functions in the pathway cofactor biosynthesis; pyridoxine 5'-phosphate biosynthesis; pyridoxine 5'-phosphate from D-erythrose 4-phosphate: step 4/5. Catalyzes the NAD(P)-dependent oxidation of 4-(phosphooxy)-L-threonine (HTP) into 2-amino-3-oxo-4-(phosphooxy)butyric acid which spontaneously decarboxylates to form 3-amino-2-oxopropyl phosphate (AHAP). This is 4-hydroxythreonine-4-phosphate dehydrogenase from Rhodopseudomonas palustris (strain ATCC BAA-98 / CGA009).